A 174-amino-acid polypeptide reads, in one-letter code: Inactive signal peptidase IA (174 aa).

The Cytoplasmic portion of the chain corresponds to 1-7 (MKKVVKY). The helical transmembrane segment at 8 to 28 (LISLILAIIIVLFVQTFVIVG) threads the bilayer. At 29 to 174 (HVIPNNDMSP…FSKWTIQFKS (146 aa)) the chain is on the extracellular side.

This sequence belongs to the peptidase S26 family.

The protein localises to the cell membrane. Its function is as follows. Catalytically inactive. This Staphylococcus aureus (strain Mu50 / ATCC 700699) protein is Inactive signal peptidase IA (spsA).